Reading from the N-terminus, the 247-residue chain is MAVLEVCCYSVACAREAERCGADRIELCAAPQEGGLTPSYGVLVSAREAITLPVHPIVRPRGGDFCYTEEEFAAMLNDIRMVRDLGFPGLVTGVLDADGQVDIPRMKKIMAAAGPLAVTFHRAFDLCADPRQAWKTLGTLGVKRILTSGQQSSAEKGISLITELIAAGDTPIIMAGAGVRAANLPLFLQAGVKEVHSSAGHWLPSEMRFRHPGVSMSADPDADEYRRYAVNGAAVAEMKRIISAWRS.

The protein belongs to the CutC family.

The protein resides in the cytoplasm. The polypeptide is PF03932 family protein CutC (Klebsiella pneumoniae subsp. pneumoniae (strain ATCC 700721 / MGH 78578)).